Consider the following 118-residue polypeptide: Ferredoxin-thioredoxin reductase, catalytic chain (118 aa).

Residue Cys-56 coordinates [4Fe-4S] cluster. Residue Cys-58 is the Nucleophile of the active site. Cys-58 and Cys-88 are oxidised to a cystine. [4Fe-4S] cluster contacts are provided by Cys-75, Cys-77, and Cys-86.

Belongs to the ferredoxin thioredoxin reductase beta subunit family. In terms of assembly, heterodimer of subunit A (variable subunit) and subunit B (catalytic subunit). Heterodimeric FTR forms a complex with ferredoxin and thioredoxin. It depends on [4Fe-4S] cluster as a cofactor.

The catalysed reaction is [thioredoxin]-disulfide + 2 reduced [2Fe-2S]-[ferredoxin] + 2 H(+) = [thioredoxin]-dithiol + 2 oxidized [2Fe-2S]-[ferredoxin]. Functionally, catalytic subunit of the ferredoxin-thioredoxin reductase (FTR), which catalyzes the two-electron reduction of thioredoxins by the electrons provided by reduced ferredoxin. The polypeptide is Ferredoxin-thioredoxin reductase, catalytic chain (Synechocystis sp. (strain ATCC 27184 / PCC 6803 / Kazusa)).